Consider the following 377-residue polypeptide: Protein-tyrosine sulfotransferase 2 (377 aa).

Residues 1-8 lie on the Cytoplasmic side of the membrane; it reads MRLSVRRV. The chain crosses the membrane as a helical; Signal-anchor for type II membrane protein span at residues 9-25; that stretch reads LLAAGCALVLVLAVQLG. Residues 26–377 lie on the Lumenal side of the membrane; that stretch reads QQVLECRAVL…NSTSSHLGSS (352 aa). 78-82 contacts 3'-phosphoadenylyl sulfate; that stretch reads RSGTT. C96 and C156 are disulfide-bonded. E99 acts as the Proton donor/acceptor in catalysis. The tract at residues 101 to 105 is interaction with peptide substrate; sequence RIIPR. 3'-phosphoadenylyl sulfate is bound by residues R183, S191, and R195. The cysteines at positions 225 and 233 are disulfide-linked. 3'-phosphoadenylyl sulfate-binding positions include Y238, 285–294, and K300; that span reads STDQVIKPVN. 2 N-linked (GlcNAc...) asparagine glycosylation sites follow: N343 and N368.

It belongs to the protein sulfotransferase family. As to quaternary structure, homodimer. Can also form heterodimers with TPST1. Post-translationally, N-glycosylated. In terms of tissue distribution, widely expressed.

It localises to the golgi apparatus membrane. The enzyme catalyses L-tyrosyl-[protein] + 3'-phosphoadenylyl sulfate = O-sulfo-L-tyrosine-[protein] + adenosine 3',5'-bisphosphate + H(+). Catalyzes the O-sulfation of tyrosine residues within acidic motifs of polypeptides, using 3'-phosphoadenylyl sulfate (PAPS) as cosubstrate. The chain is Protein-tyrosine sulfotransferase 2 (TPST2) from Homo sapiens (Human).